A 513-amino-acid polypeptide reads, in one-letter code: Aspartyl protease family protein 1 (513 aa).

Residues 1 to 21 form the signal peptide; sequence MVWYSSCRILFLGLLILLASS. A Peptidase A1 domain is found at 104–445; sequence HYANVTVGTP…DREKLILGWK (342 aa). Residues aspartate 122 and aspartate 327 contribute to the active site. The interval 452–488 is disordered; the sequence is GETSARTLPSNRSSSSARPPASSFDPEATNIPSQRPN. Residues 455 to 474 are compositionally biased toward low complexity; that stretch reads SARTLPSNRSSSSARPPASS. A lipid anchor (GPI-anchor amidated serine) is attached at serine 484. The propeptide at 485 to 513 is removed in mature form; it reads QRPNTSTTSAAYSLSISLSLFFFSILAIL.

This sequence belongs to the peptidase A1 family.

It localises to the cell membrane. Functionally, aspartyl protease. Not able to cleave BAG6. The polypeptide is Aspartyl protease family protein 1 (Arabidopsis thaliana (Mouse-ear cress)).